Here is a 352-residue protein sequence, read N- to C-terminus: Phosphoribosylformylglycinamidine cyclo-ligase (352 aa).

The protein belongs to the AIR synthase family.

The protein localises to the cytoplasm. It carries out the reaction 2-formamido-N(1)-(5-O-phospho-beta-D-ribosyl)acetamidine + ATP = 5-amino-1-(5-phospho-beta-D-ribosyl)imidazole + ADP + phosphate + H(+). Its pathway is purine metabolism; IMP biosynthesis via de novo pathway; 5-amino-1-(5-phospho-D-ribosyl)imidazole from N(2)-formyl-N(1)-(5-phospho-D-ribosyl)glycinamide: step 2/2. The sequence is that of Phosphoribosylformylglycinamidine cyclo-ligase from Hahella chejuensis (strain KCTC 2396).